A 267-amino-acid chain; its full sequence is MEMO1 family protein MA_0601 (267 aa).

Belongs to the MEMO1 family.

In Methanosarcina acetivorans (strain ATCC 35395 / DSM 2834 / JCM 12185 / C2A), this protein is MEMO1 family protein MA_0601.